Reading from the N-terminus, the 290-residue chain is Bifunctional protein FolD 1 (290 aa).

Residues 172–174 (GAS) and Ile-238 contribute to the NADP(+) site.

The protein belongs to the tetrahydrofolate dehydrogenase/cyclohydrolase family. Homodimer.

It catalyses the reaction (6R)-5,10-methylene-5,6,7,8-tetrahydrofolate + NADP(+) = (6R)-5,10-methenyltetrahydrofolate + NADPH. It carries out the reaction (6R)-5,10-methenyltetrahydrofolate + H2O = (6R)-10-formyltetrahydrofolate + H(+). Its pathway is one-carbon metabolism; tetrahydrofolate interconversion. In terms of biological role, catalyzes the oxidation of 5,10-methylenetetrahydrofolate to 5,10-methenyltetrahydrofolate and then the hydrolysis of 5,10-methenyltetrahydrofolate to 10-formyltetrahydrofolate. The chain is Bifunctional protein FolD 1 from Pseudomonas putida (strain GB-1).